A 96-amino-acid polypeptide reads, in one-letter code: ATP-dependent Clp protease adapter protein ClpS (96 aa).

Belongs to the ClpS family. Binds to the N-terminal domain of the chaperone ClpA.

Its function is as follows. Involved in the modulation of the specificity of the ClpAP-mediated ATP-dependent protein degradation. In Streptomyces coelicolor (strain ATCC BAA-471 / A3(2) / M145), this protein is ATP-dependent Clp protease adapter protein ClpS.